The chain runs to 813 residues: MNEYNFSDIEKSTQEYWRKNDTFKTIEDNTKEKFYCLSMLPYPSGTLHMGHVRNYTIGDVIARYQKMQGKNVLHPMGWDAFGLPAENAAIKHKKSPYEWTKSNIAYMRSQFDSLGFSFDWSREIATCDEDYYKWEQWFFIQLYKKGLAYRKNSVVNWDPVDQTVLANEQVVDGRGWRSGALVEKKEIPQWFLKITDYADELLQDINKLDNWPEAVKTMQINWIGKSKGLTVKFKVKDSNQEIEVFTTRPDTLMGVNYLGIAPEHPLALKEAKSNSQLAAFIEECKKTSTMEADLATQEKKGFKTSIKVIHPISAETIDVWVANFVLMGYGSGAVMSVPAHDQRDWEFAQKYNIPLKQVIESNDNKLKIDLEKQAFTEKGILINSGEFDGLNFKNAYQAIKKYLTEQNKGYETTNFRIHDWGISRQRYWGCPIPMIHCDDCGAVPEKEENLPVRLPTDVALTEAGSPLKDIPEFINVACPECGKPAKRETDTFDTFFESSWYYARYTCPTANQMLDQEANYWLPVDKYIGGIEHAIMHLLYARFFHKLMRDQGLVKSDEPFKNLLTQGMVLKDGAKMSKSKGNIVDPQELIDKYGADTVRLFSMFAAPPEQSLEWSETGVEGANKFLRKVFNYAELNKVIFAKNITLESQKLTKEDKKARFEIHSNLKQAIFDFDKSQFNTVVSACMKILNTLNNYDNLSESVKVEGFSILLRILAPFTPHLCHYLWQQLNLGEDILHTSFPIVDNNALEKDEFLLVVQINGKLKAKLELDASLSSNQVEEVVLADEHVKSFIDNKQVVKVIYVPQKLINIVIK.

The 'HIGH' region motif lies at 41 to 51 (PYPSGTLHMGH). A 'KMSKS' region motif is present at residues 575–579 (KMSKS). Lys578 provides a ligand contact to ATP.

Belongs to the class-I aminoacyl-tRNA synthetase family.

Its subcellular location is the cytoplasm. It carries out the reaction tRNA(Leu) + L-leucine + ATP = L-leucyl-tRNA(Leu) + AMP + diphosphate. The chain is Leucine--tRNA ligase from Francisella tularensis subsp. tularensis (strain WY96-3418).